A 299-amino-acid chain; its full sequence is Taste receptor type 2 member 4 (299 aa).

Residues 1–9 (MLRLFYFSA) are Extracellular-facing. A helical transmembrane segment spans residues 10–30 (VIASVILNFVGIIMNLFITVV). Residues 31–46 (NCKTWVKSHRISSSDR) lie on the Cytoplasmic side of the membrane. The helical transmembrane segment at 47-67 (ILFSLGITRFLMLGLFLVNTI) threads the bilayer. Topologically, residues 68 to 81 (YFVSSNMERSVYLS) are extracellular. Residues 82-102 (AFFVLCFMFLDSSSLWFVTLL) form a helical membrane-spanning segment. The Cytoplasmic segment spans residues 103–131 (NILYCVKITNFQHSVFLLLKRSISPKIPR). Residues 132 to 152 (LLLAFVLISAFTTCLYITLSQ) form a helical membrane-spanning segment. Residues 153–172 (ASPFPELVTTRNNTSFNISE) lie on the Extracellular side of the membrane. N164, N165, and N169 each carry an N-linked (GlcNAc...) asparagine glycan. The helical transmembrane segment at 173-193 (GILSLVVSLVLSSSLQFIINV) threads the bilayer. Residues 194–230 (TSASLLIHSLRRHIQKMQKNATGFWNPQMEAHVGAMK) lie on the Cytoplasmic side of the membrane. A helical transmembrane segment spans residues 231–251 (LMVYFLILYIPYSVATLVQYL). Over 252–262 (PFYAGMDMGTK) the chain is Extracellular. Residues 263–283 (SICLIFATLYSPGHSVLIIIT) form a helical membrane-spanning segment. Residues 284–299 (HPKLKTTAKKILCFKK) are Cytoplasmic-facing.

It belongs to the G-protein coupled receptor T2R family.

The protein localises to the membrane. Its subcellular location is the cell projection. It localises to the cilium membrane. Gustducin-coupled receptor implicated in the perception of bitter compounds in the oral cavity and the gastrointestinal tract. Signals through PLCB2 and the calcium-regulated cation channel TRPM5. In airway epithelial cells, binding of denatonium increases the intracellular calcium ion concentration and stimulates ciliary beat frequency. This chain is Taste receptor type 2 member 4 (TAS2R4), found in Gorilla gorilla gorilla (Western lowland gorilla).